Reading from the N-terminus, the 89-residue chain is Large ribosomal subunit protein bL27 (89 aa).

Positions 1-26 are disordered; sequence MATKKAGGSSKNGRDSAGRRLGLKKS.

It belongs to the bacterial ribosomal protein bL27 family.

The polypeptide is Large ribosomal subunit protein bL27 (Orientia tsutsugamushi (strain Ikeda) (Rickettsia tsutsugamushi)).